Reading from the N-terminus, the 33-residue chain is Brevinin-2LT (33 aa).

Cys-27 and Cys-33 form a disulfide bridge.

In terms of tissue distribution, expressed by the skin glands.

Its subcellular location is the secreted. Its function is as follows. Has antibacterial activity. In Rana latastei (Italian agile frog), this protein is Brevinin-2LT.